The primary structure comprises 445 residues: Tubulin beta-4B chain (445 aa).

The MREI motif motif lies at Met-1 to Ile-4. Gln-11 is a GTP binding site. Residue Thr-55 is modified to Phosphothreonine. Position 58 is an N6-acetyllysine (Lys-58). Positions 69, 138, 142, 143, and 144 each coordinate GTP. Residue Glu-69 participates in Mg(2+) binding. The residue at position 172 (Ser-172) is a Phosphoserine; by CDK1. Positions 204 and 226 each coordinate GTP. The segment at Gln-426–Ala-445 is disordered. A compositionally biased stretch (acidic residues) spans Thr-429 to Ala-445. Glu-438 is subject to 5-glutamyl polyglutamate.

The protein belongs to the tubulin family. Dimer of alpha and beta chains. A typical microtubule is a hollow water-filled tube with an outer diameter of 25 nm and an inner diameter of 15 nM. Alpha-beta heterodimers associate head-to-tail to form protofilaments running lengthwise along the microtubule wall with the beta-tubulin subunit facing the microtubule plus end conferring a structural polarity. Microtubules usually have 13 protofilaments but different protofilament numbers can be found in some organisms and specialized cells. Component of sperm flagellar doublet microtubules. Requires Mg(2+) as cofactor. In terms of processing, some glutamate residues at the C-terminus are polyglycylated, resulting in polyglycine chains on the gamma-carboxyl group. Glycylation is mainly limited to tubulin incorporated into axonemes (cilia and flagella) whereas glutamylation is prevalent in neuronal cells, centrioles, axonemes, and the mitotic spindle. Both modifications can coexist on the same protein on adjacent residues, and lowering polyglycylation levels increases polyglutamylation, and reciprocally. Cilia and flagella glycylation is required for their stability and maintenance. Flagella glycylation controls sperm motility. Post-translationally, some glutamate residues at the C-terminus are polyglutamylated, resulting in polyglutamate chains on the gamma-carboxyl group. Polyglutamylation plays a key role in microtubule severing by spastin (SPAST). SPAST preferentially recognizes and acts on microtubules decorated with short polyglutamate tails: severing activity by SPAST increases as the number of glutamates per tubulin rises from one to eight, but decreases beyond this glutamylation threshold. Glutamylation is also involved in cilia motility. Phosphorylated on Ser-172 by CDK1 during the cell cycle, from metaphase to telophase, but not in interphase. This phosphorylation inhibits tubulin incorporation into microtubules.

The protein resides in the cytoplasm. The protein localises to the cytoskeleton. Its subcellular location is the flagellum axoneme. Tubulin is the major constituent of microtubules, a cylinder consisting of laterally associated linear protofilaments composed of alpha- and beta-tubulin heterodimers. Microtubules grow by the addition of GTP-tubulin dimers to the microtubule end, where a stabilizing cap forms. Below the cap, tubulin dimers are in GDP-bound state, owing to GTPase activity of alpha-tubulin. This Rattus norvegicus (Rat) protein is Tubulin beta-4B chain (Tubb4b).